The primary structure comprises 324 residues: Calpain-2 catalytic subunit (324 aa).

The domain III stretch occupies residues 1–138 (YPNTFWMNPQ…KKADYQVVDD (138 aa)). The linker stretch occupies residues 139 to 153 (EIEADLEENDASEDD). Residues 158 to 324 (FRRLFAQLAG…LISWLCFSVL (167 aa)) are domain IV. Ca(2+)-binding residues include alanine 166, aspartate 169, glutamate 171, glutamate 176, aspartate 209, aspartate 211, serine 213, lysine 215, glutamate 220, aspartate 239, aspartate 241, serine 243, threonine 245, glutamate 250, aspartate 282, and asparagine 285. EF-hand domains are found at residues 190–224 (DIKSDGFSIETCRIMVDMLDSDGSAKLGLKEFYIL) and 226–261 (TKIQKYQKIYREIDVDRSGTMNSYEMRKALEEAGFK).

The protein belongs to the peptidase C2 family. Forms a heterodimer with a small (regulatory) subunit (CAPNS1). Interacts with CPEB3; this leads to cleavage of CPEB3. Ca(2+) is required as a cofactor. As to expression, ubiquitous.

The protein resides in the cytoplasm. It is found in the cell membrane. It catalyses the reaction Broad endopeptidase specificity.. With respect to regulation, activated by 200-1000 micromolar concentrations of calcium and inhibited by calpastatin. Its function is as follows. Calcium-regulated non-lysosomal thiol-protease which catalyzes limited proteolysis of substrates involved in cytoskeletal remodeling and signal transduction. Proteolytically cleaves MYOC at 'Arg-226'. Proteolytically cleaves CPEB3 following neuronal stimulation which abolishes CPEB3 translational repressor activity, leading to translation of CPEB3 target mRNAs. The polypeptide is Calpain-2 catalytic subunit (CAPN2) (Sus scrofa (Pig)).